The chain runs to 399 residues: Elongation factor Tu (399 aa).

Residues 10 to 204 (KPHVNIGTIG…AVDANIPEPE (195 aa)) form the tr-type G domain. Residues 19–26 (GHVDHGKT) form a G1 region. Residue 19–26 (GHVDHGKT) participates in GTP binding. Threonine 26 is a Mg(2+) binding site. Residues 60–64 (GITIN) are G2. Residues 81 to 84 (DCPG) form a G3 region. GTP is bound by residues 81-85 (DCPGH) and 136-139 (NKCD). Positions 136-139 (NKCD) are G4. Positions 174–176 (SGL) are G5.

It belongs to the TRAFAC class translation factor GTPase superfamily. Classic translation factor GTPase family. EF-Tu/EF-1A subfamily. Monomer.

The protein localises to the cytoplasm. It carries out the reaction GTP + H2O = GDP + phosphate + H(+). Its function is as follows. GTP hydrolase that promotes the GTP-dependent binding of aminoacyl-tRNA to the A-site of ribosomes during protein biosynthesis. This Synechococcus sp. (strain WH7803) protein is Elongation factor Tu.